The sequence spans 184 residues: Phosducin-like protein 3 (184 aa).

The segment at 45–184 (HGELKEIDEQ…VKNNKFKEDD (140 aa)) is thioredoxin fold.

The protein belongs to the phosducin family.

The sequence is that of Phosducin-like protein 3 (phlp3) from Dictyostelium discoideum (Social amoeba).